A 233-amino-acid chain; its full sequence is tRNA (guanine-N(7)-)-methyltransferase (233 aa).

The tract at residues Met1–Val23 is disordered. S-adenosyl-L-methionine-binding residues include Glu64, Glu89, Asp116, and Asp138. Asp138 is an active-site residue. Substrate contacts are provided by residues Lys142, Asp174, and Thr212–Glu215.

The protein belongs to the class I-like SAM-binding methyltransferase superfamily. TrmB family.

It catalyses the reaction guanosine(46) in tRNA + S-adenosyl-L-methionine = N(7)-methylguanosine(46) in tRNA + S-adenosyl-L-homocysteine. The protein operates within tRNA modification; N(7)-methylguanine-tRNA biosynthesis. Functionally, catalyzes the formation of N(7)-methylguanine at position 46 (m7G46) in tRNA. The polypeptide is tRNA (guanine-N(7)-)-methyltransferase (Mesorhizobium japonicum (strain LMG 29417 / CECT 9101 / MAFF 303099) (Mesorhizobium loti (strain MAFF 303099))).